Consider the following 878-residue polypeptide: Calcium-transporting ATPase 1 (878 aa).

The next 4 membrane-spanning stretches (helical) occupy residues 50-72, 76-95, 243-263, and 281-301; these read LFIDTLKDPMVIILLLVAFVQLF, FVESLVIFIVLMINSVVAVV, LGWVILALCALIFAVQILRLF, and FAVAVAVAAIPEALSSVVTIV. Ca(2+) contacts are provided by Val-287, Ala-288, Ile-290, and Glu-292. Residue Asp-334 is the 4-aspartylphosphate intermediate of the active site. A run of 6 helical transmembrane segments spans residues 681 to 701, 704 to 724, 753 to 773, 779 to 799, 816 to 836, and 845 to 865; these read LFSGNLGAIIAIVFALVVGWV, FTALQLLFINLVNDSVPAIAL, VILIRGSLIGIAAIISQYVGQ, MGVAMAFTTLILARTLQTFAA, YVLMAVTFCLALYSLTTLPFL, and AFGWSQWIVAAGLAVIAVICM. Asn-713 and Asp-717 together coordinate Ca(2+).

The protein belongs to the cation transport ATPase (P-type) (TC 3.A.3) family. Type IIA subfamily.

It localises to the cell membrane. The enzyme catalyses Ca(2+)(in) + ATP + H2O = Ca(2+)(out) + ADP + phosphate + H(+). Inhibited by very high concentrations of cyclopiazonic acid (CPA). Its function is as follows. Catalyzes the hydrolysis of ATP coupled with the transport of calcium. This is Calcium-transporting ATPase 1 (yoaB) from Lactococcus lactis subsp. lactis (strain IL1403) (Streptococcus lactis).